We begin with the raw amino-acid sequence, 504 residues long: Aspartyl/glutamyl-tRNA(Asn/Gln) amidotransferase subunit B (504 aa).

Belongs to the GatB/GatE family. GatB subfamily. Heterotrimer of A, B and C subunits.

The catalysed reaction is L-glutamyl-tRNA(Gln) + L-glutamine + ATP + H2O = L-glutaminyl-tRNA(Gln) + L-glutamate + ADP + phosphate + H(+). It carries out the reaction L-aspartyl-tRNA(Asn) + L-glutamine + ATP + H2O = L-asparaginyl-tRNA(Asn) + L-glutamate + ADP + phosphate + 2 H(+). Allows the formation of correctly charged Asn-tRNA(Asn) or Gln-tRNA(Gln) through the transamidation of misacylated Asp-tRNA(Asn) or Glu-tRNA(Gln) in organisms which lack either or both of asparaginyl-tRNA or glutaminyl-tRNA synthetases. The reaction takes place in the presence of glutamine and ATP through an activated phospho-Asp-tRNA(Asn) or phospho-Glu-tRNA(Gln). This chain is Aspartyl/glutamyl-tRNA(Asn/Gln) amidotransferase subunit B, found in Tropheryma whipplei (strain Twist) (Whipple's bacillus).